A 148-amino-acid polypeptide reads, in one-letter code: Small ribosomal subunit protein uS7m (148 aa).

The protein belongs to the universal ribosomal protein uS7 family. As to quaternary structure, part of the small ribosomal subunit.

The protein resides in the mitochondrion. Its function is as follows. One of the primary rRNA binding proteins, it binds directly to 18S rRNA where it nucleates assembly of the head domain of the small subunit. The polypeptide is Small ribosomal subunit protein uS7m (RPS7) (Arabidopsis thaliana (Mouse-ear cress)).